Consider the following 1050-residue polypeptide: Elongation factor 3 (1050 aa).

ADP contacts are provided by valine 43 and histidine 45. The HEAT 1 repeat unit spans residues aspartate 46–leucine 83. Serine 86 is a binding site for ADP. HEAT repeat units follow at residues proline 89–proline 126, threonine 127–alanine 165, leucine 169–asparagine 206, aspartate 208–methionine 244, alanine 245–aspartate 282, and proline 288–valine 326. 3 residues coordinate ADP: threonine 395, histidine 399, and glutamate 400. 2 ABC transporter domains span residues aspartate 429–leucine 646 and valine 672–aspartate 998. Residues asparagine 708, glutamate 927, asparagine 930, and histidine 956 each contribute to the ADP site. A disordered region spans residues glycine 980–phenylalanine 1050. Basic residues predominate over residues alanine 1013–lysine 1037.

This sequence belongs to the ABC transporter superfamily. ABCF family. EF3 subfamily. As to quaternary structure, monomer.

The protein localises to the cytoplasm. The catalysed reaction is ATP + H2O = ADP + phosphate + H(+). It functions in the pathway protein biosynthesis; polypeptide chain elongation. Functionally, ribosome-dependent ATPase that functions in cytoplasmic translation elongation. Required for the ATP-dependent release of deacylated tRNA from the ribosomal E-site during protein biosynthesis. Stimulates the eEF1A-dependent binding of aminoacyl-tRNA to the ribosomal A-site, which has reduced affinity for tRNA as long as the E-site is occupied. Assists translation termination by stimulating the release of nascent protein from the ribosome by release factors. The polypeptide is Elongation factor 3 (CEF3) (Candida albicans (strain SC5314 / ATCC MYA-2876) (Yeast)).